A 244-amino-acid polypeptide reads, in one-letter code: 1-(5-phosphoribosyl)-5-[(5-phosphoribosylamino)methylideneamino] imidazole-4-carboxamide isomerase (244 aa).

Residue Asp-7 is the Proton acceptor of the active site. Asp-129 (proton donor) is an active-site residue.

It belongs to the HisA/HisF family.

It is found in the cytoplasm. It catalyses the reaction 1-(5-phospho-beta-D-ribosyl)-5-[(5-phospho-beta-D-ribosylamino)methylideneamino]imidazole-4-carboxamide = 5-[(5-phospho-1-deoxy-D-ribulos-1-ylimino)methylamino]-1-(5-phospho-beta-D-ribosyl)imidazole-4-carboxamide. The protein operates within amino-acid biosynthesis; L-histidine biosynthesis; L-histidine from 5-phospho-alpha-D-ribose 1-diphosphate: step 4/9. The polypeptide is 1-(5-phosphoribosyl)-5-[(5-phosphoribosylamino)methylideneamino] imidazole-4-carboxamide isomerase (Pseudoalteromonas atlantica (strain T6c / ATCC BAA-1087)).